The chain runs to 271 residues: Glutamate racemase (271 aa).

Substrate contacts are provided by residues 10–11 (DS) and 42–43 (YG). Cysteine 73 functions as the Proton donor/acceptor in the catalytic mechanism. 74–75 (NT) lines the substrate pocket. Cysteine 183 acts as the Proton donor/acceptor in catalysis. 184–185 (TH) provides a ligand contact to substrate.

Belongs to the aspartate/glutamate racemases family.

It catalyses the reaction L-glutamate = D-glutamate. It functions in the pathway cell wall biogenesis; peptidoglycan biosynthesis. Its function is as follows. Provides the (R)-glutamate required for cell wall biosynthesis. The sequence is that of Glutamate racemase from Lactococcus lactis subsp. cremoris (strain SK11).